The sequence spans 330 residues: T-cell surface glycoprotein CD1b4 (330 aa).

The signal sequence occupies residues 1 to 15 (MLLLALAFFFPAGDT). Residues 16–299 (QNVLPGKISF…LYWGHSISIG (284 aa)) lie on the Extracellular side of the membrane. Residues Asn-35, Asn-72, and Asn-143 are each glycosylated (N-linked (GlcNAc...) asparagine). 2 cysteine pairs are disulfide-bonded: Cys-117–Cys-181 and Cys-221–Cys-276. One can recognise an Ig-like domain in the interval 182–292 (PRYLMSVIEA…LEGQDIILYW (111 aa)). A helical transmembrane segment spans residues 300–320 (WIILAVLVPCLIVLVLFILWF). Topologically, residues 321 to 330 (YRRWSYEDIF) are cytoplasmic. The short motif at 326-329 (YEDI) is the Internalization signal element.

As to quaternary structure, heterodimer with B2M (beta-2-microglobulin). Interacts with saposin C.

It is found in the cell membrane. The protein resides in the endosome membrane. Its subcellular location is the lysosome membrane. Functionally, antigen-presenting protein that binds self and non-self lipid and glycolipid antigens and presents them to T-cell receptors on natural killer T-cells. The sequence is that of T-cell surface glycoprotein CD1b4 (CD1B4) from Cavia porcellus (Guinea pig).